The sequence spans 203 residues: Interferon type B (203 aa).

A signal peptide spans 1–27 (MTANHQSPGMHSILLLLLLPALTTTFS). 2 disulfide bridges follow: Cys28-Cys125 and Cys57-Cys164. Asn37 and Asn160 each carry an N-linked (GlcNAc...) asparagine glycan.

The protein belongs to the alpha/beta interferon family.

Its subcellular location is the secreted. Its function is as follows. Has antiviral activities. This chain is Interferon type B (IFNB), found in Gallus gallus (Chicken).